A 230-amino-acid chain; its full sequence is Urease accessory protein UreE (230 aa).

The tract at residues 197–230 is disordered; that stretch reads LHIHAIHSHGDGDSHNHDHDHSHSHGDHDHDHKH. The segment covering 204–230 has biased composition (basic and acidic residues); it reads SHGDGDSHNHDHDHSHSHGDHDHDHKH.

It belongs to the UreE family.

It localises to the cytoplasm. Its function is as follows. Involved in urease metallocenter assembly. Binds nickel. Probably functions as a nickel donor during metallocenter assembly. The sequence is that of Urease accessory protein UreE from Yersinia aldovae.